A 1280-amino-acid chain; its full sequence is Rho guanine nucleotide exchange factor 10-like protein (1280 aa).

Positions 1–10 (MASSNPPPQP) are enriched in pro residues. Positions 1 to 94 (MASSNPPPQP…TEAPTVVSNG (94 aa)) are disordered. Residues 26-46 (EVEEDSGEAFEFDDSDEEEDT) show a composition bias toward acidic residues. S40 carries the phosphoserine modification. Positions 78–89 (PAAAPPQTEAPT) are enriched in low complexity. Phosphotyrosine is present on residues Y131 and Y152. Residues 161 to 202 (PRETEDLGWSSSEFESYSEDSGEETKPEAEPTKHRGSFQPKL) form a disordered region. The segment covering 183 to 193 (EETKPEAEPTK) has biased composition (basic and acidic residues). A Phosphoserine modification is found at S279. Positions 314 to 501 (VRRHILGSIV…ETLAEKLNEQ (188 aa)) constitute a DH domain. Disordered regions lie at residues 1133–1163 (QEEA…HTAR) and 1186–1207 (PLLS…SEED).

In terms of assembly, interacts with RHOA, RHOB and RHOC.

It localises to the cytoplasm. In terms of biological role, acts as a guanine nucleotide exchange factor (GEF) for RHOA, RHOB and RHOC. The chain is Rho guanine nucleotide exchange factor 10-like protein (Arhgef10l) from Mus musculus (Mouse).